Here is a 194-residue protein sequence, read N- to C-terminus: MSQIKLIVGLANPGTKYEDTRHNAGEWLINEIARQFNVSLKEEAKFFGKVAKINAAGGEVRLLVPTTFMNLSGKAVGALANFYRIKPEEILVAHDELDLPPGVAKIKQGGGHGGHNGLKDIIASLGNSNNFYRVRIGIGHPGSKELVAGYVLGKPSPQDQEKINAAVDEAGRCVDLLLKDGITKATNRLNAFKA.

Tyr-17 contacts tRNA. His-22 serves as the catalytic Proton acceptor. Residues Phe-68, Asn-70, and Asn-116 each contribute to the tRNA site.

This sequence belongs to the PTH family. In terms of assembly, monomer.

The protein localises to the cytoplasm. The catalysed reaction is an N-acyl-L-alpha-aminoacyl-tRNA + H2O = an N-acyl-L-amino acid + a tRNA + H(+). Its function is as follows. Hydrolyzes ribosome-free peptidyl-tRNAs (with 1 or more amino acids incorporated), which drop off the ribosome during protein synthesis, or as a result of ribosome stalling. Catalyzes the release of premature peptidyl moieties from peptidyl-tRNA molecules trapped in stalled 50S ribosomal subunits, and thus maintains levels of free tRNAs and 50S ribosomes. The polypeptide is Peptidyl-tRNA hydrolase (Actinobacillus pleuropneumoniae serotype 5b (strain L20)).